Here is a 469-residue protein sequence, read N- to C-terminus: MKLLSEKATCNSHGQDSSYFLGWQEYEKNPYDEIQNPKGIIQMGLAENQLSFDLLESWLAQNPDAAGFKRNGESIFRELALFQDYHGLPAFKNAMTKFMSEIRGNRVSFDSNNLVLTAGATSANETLMFCLANQGDAFLLPTPYYPGFDRDLKWRTGAEIVPIHCSSSNGFRITESALEEAYLDAKKRNLKVKGVLVTNPSNPLGTTLNRNELELLLTFIDEKGIHLISDEIYSGTVFNSPGFVSVMEVLIEKNYMKTRVWERVHIVYSLSKDLGLPGFRIGAIYSNDEMVVSAATKMSSFGLVSSQTQYLLSCMLSDKKFTKKYISENQKRLKKRHAMLVKGLKSAGINCLESNAGLFCWVDMRHLLSSNNFDAEMDLWKKIVYDVGLNISPGSSCHCTEPGWFRVCFANMSEDTLDLAMRRIKDFVESTAPNATNHQNQQQSNANSKKKSFSKWVFRLSFNDRQRER.

Lysine 272 carries the N6-(pyridoxal phosphate)lysine modification. A disordered region spans residues 432-452 (APNATNHQNQQQSNANSKKKS). The segment covering 437-447 (NHQNQQQSNAN) has biased composition (low complexity).

Belongs to the class-I pyridoxal-phosphate-dependent aminotransferase family. Homodimer. The cofactor is pyridoxal 5'-phosphate.

The catalysed reaction is S-adenosyl-L-methionine = 1-aminocyclopropane-1-carboxylate + S-methyl-5'-thioadenosine + H(+). It functions in the pathway alkene biosynthesis; ethylene biosynthesis via S-adenosyl-L-methionine; ethylene from S-adenosyl-L-methionine: step 1/2. In terms of biological role, catalyzes the formation of 1-aminocyclopropane-1-carboxylate, a direct precursor of ethylene in higher plants. In Solanum lycopersicum (Tomato), this protein is 1-aminocyclopropane-1-carboxylate synthase 3 (ACS3).